A 361-amino-acid chain; its full sequence is Lipoyl synthase 1, chloroplastic (361 aa).

[4Fe-4S] cluster-binding residues include cysteine 87, cysteine 92, cysteine 98, cysteine 124, cysteine 128, cysteine 131, and serine 339. Positions 107–328 (GEGDGIATAT…KEYGESVGFR (222 aa)) constitute a Radical SAM core domain.

Belongs to the radical SAM superfamily. Lipoyl synthase family. The cofactor is [4Fe-4S] cluster.

The protein localises to the plastid. The protein resides in the chloroplast. It catalyses the reaction [[Fe-S] cluster scaffold protein carrying a second [4Fe-4S](2+) cluster] + N(6)-octanoyl-L-lysyl-[protein] + 2 oxidized [2Fe-2S]-[ferredoxin] + 2 S-adenosyl-L-methionine + 4 H(+) = [[Fe-S] cluster scaffold protein] + N(6)-[(R)-dihydrolipoyl]-L-lysyl-[protein] + 4 Fe(3+) + 2 hydrogen sulfide + 2 5'-deoxyadenosine + 2 L-methionine + 2 reduced [2Fe-2S]-[ferredoxin]. The protein operates within protein modification; protein lipoylation via endogenous pathway; protein N(6)-(lipoyl)lysine from octanoyl-[acyl-carrier-protein]: step 2/2. Catalyzes the radical-mediated insertion of two sulfur atoms into the C-6 and C-8 positions of the octanoyl moiety bound to the lipoyl domains of lipoate-dependent enzymes, thereby converting the octanoylated domains into lipoylated derivatives. This Zea mays (Maize) protein is Lipoyl synthase 1, chloroplastic.